Reading from the N-terminus, the 433-residue chain is Phosphomethylpyrimidine synthase 1 (433 aa).

Residues asparagine 66, methionine 94, tyrosine 123, histidine 162, serine 184 to glycine 186, aspartate 225 to arginine 228, and glutamate 264 contribute to the substrate site. Histidine 268 provides a ligand contact to Zn(2+). Tyrosine 291 is a binding site for substrate. Histidine 332 provides a ligand contact to Zn(2+). The [4Fe-4S] cluster site is built by cysteine 408, cysteine 411, and cysteine 415.

The protein belongs to the ThiC family. The cofactor is [4Fe-4S] cluster.

The enzyme catalyses 5-amino-1-(5-phospho-beta-D-ribosyl)imidazole + S-adenosyl-L-methionine = 4-amino-2-methyl-5-(phosphooxymethyl)pyrimidine + CO + 5'-deoxyadenosine + formate + L-methionine + 3 H(+). It functions in the pathway cofactor biosynthesis; thiamine diphosphate biosynthesis. Functionally, catalyzes the synthesis of the hydroxymethylpyrimidine phosphate (HMP-P) moiety of thiamine from aminoimidazole ribotide (AIR) in a radical S-adenosyl-L-methionine (SAM)-dependent reaction. This is Phosphomethylpyrimidine synthase 1 from Saccharolobus solfataricus (strain ATCC 35092 / DSM 1617 / JCM 11322 / P2) (Sulfolobus solfataricus).